The following is a 193-amino-acid chain: Xanthine phosphoribosyltransferase (193 aa).

Positions 20 and 27 each coordinate xanthine. Residue 128-132 (ANGQA) coordinates 5-phospho-alpha-D-ribose 1-diphosphate. Lysine 156 is a xanthine binding site.

It belongs to the purine/pyrimidine phosphoribosyltransferase family. Xpt subfamily. As to quaternary structure, homodimer.

Its subcellular location is the cytoplasm. It carries out the reaction XMP + diphosphate = xanthine + 5-phospho-alpha-D-ribose 1-diphosphate. The protein operates within purine metabolism; XMP biosynthesis via salvage pathway; XMP from xanthine: step 1/1. Converts the preformed base xanthine, a product of nucleic acid breakdown, to xanthosine 5'-monophosphate (XMP), so it can be reused for RNA or DNA synthesis. The chain is Xanthine phosphoribosyltransferase from Streptococcus pneumoniae serotype 2 (strain D39 / NCTC 7466).